The following is a 501-amino-acid chain: Uridine kinase (501 aa).

At serine 17 the chain carries Phosphoserine. Residue 63–70 (GASGSGKT) participates in ATP binding. Serine 276 is modified (phosphoserine).

It belongs to the uridine kinase family.

The protein localises to the cytoplasm. The protein resides in the nucleus. The catalysed reaction is uridine + ATP = UMP + ADP + H(+). It catalyses the reaction cytidine + ATP = CMP + ADP + H(+). Its pathway is pyrimidine metabolism; CTP biosynthesis via salvage pathway; CTP from cytidine: step 1/3. It functions in the pathway pyrimidine metabolism; UMP biosynthesis via salvage pathway; UMP from uridine: step 1/1. In terms of biological role, catalyzes the conversion of uridine into UMP and cytidine into CMP in the pyrimidine salvage pathway. The protein is Uridine kinase (URK1) of Saccharomyces cerevisiae (strain ATCC 204508 / S288c) (Baker's yeast).